Consider the following 584-residue polypeptide: Arginine--tRNA ligase (584 aa).

The 'HIGH' region signature appears at 126 to 136 (PNIAKEMHVGH).

The protein belongs to the class-I aminoacyl-tRNA synthetase family. Monomer.

It localises to the cytoplasm. It carries out the reaction tRNA(Arg) + L-arginine + ATP = L-arginyl-tRNA(Arg) + AMP + diphosphate. The polypeptide is Arginine--tRNA ligase (Synechococcus sp. (strain ATCC 27144 / PCC 6301 / SAUG 1402/1) (Anacystis nidulans)).